The chain runs to 393 residues: Formate-dependent phosphoribosylglycinamide formyltransferase (393 aa).

N(1)-(5-phospho-beta-D-ribosyl)glycinamide-binding positions include 22-23 and glutamate 82; that span reads EL. ATP-binding positions include arginine 114, lysine 155, 160 to 165, 195 to 198, and glutamate 203; these read SSGHGQ and EGFV. The region spanning 119 to 308 is the ATP-grasp domain; sequence RLAAEKLKLP…EFALHARAIL (190 aa). Positions 267 and 279 each coordinate Mg(2+). Residues aspartate 286, lysine 356, and 363-364 each bind N(1)-(5-phospho-beta-D-ribosyl)glycinamide; that span reads RR.

This sequence belongs to the PurK/PurT family. As to quaternary structure, homodimer.

It carries out the reaction N(1)-(5-phospho-beta-D-ribosyl)glycinamide + formate + ATP = N(2)-formyl-N(1)-(5-phospho-beta-D-ribosyl)glycinamide + ADP + phosphate + H(+). It participates in purine metabolism; IMP biosynthesis via de novo pathway; N(2)-formyl-N(1)-(5-phospho-D-ribosyl)glycinamide from N(1)-(5-phospho-D-ribosyl)glycinamide (formate route): step 1/1. In terms of biological role, involved in the de novo purine biosynthesis. Catalyzes the transfer of formate to 5-phospho-ribosyl-glycinamide (GAR), producing 5-phospho-ribosyl-N-formylglycinamide (FGAR). Formate is provided by PurU via hydrolysis of 10-formyl-tetrahydrofolate. The protein is Formate-dependent phosphoribosylglycinamide formyltransferase of Histophilus somni (strain 129Pt) (Haemophilus somnus).